The primary structure comprises 255 residues: Acetylglutamate kinase (255 aa).

Residues 40 to 41 (GG), Arg-62, and Asn-153 contribute to the substrate site.

The protein belongs to the acetylglutamate kinase family. ArgB subfamily.

Its subcellular location is the cytoplasm. The catalysed reaction is N-acetyl-L-glutamate + ATP = N-acetyl-L-glutamyl 5-phosphate + ADP. Its pathway is amino-acid biosynthesis; L-arginine biosynthesis; N(2)-acetyl-L-ornithine from L-glutamate: step 2/4. Its function is as follows. Catalyzes the ATP-dependent phosphorylation of N-acetyl-L-glutamate. The protein is Acetylglutamate kinase of Bacillus cereus (strain ZK / E33L).